The chain runs to 84 residues: Large ribosomal subunit protein bL27 (84 aa).

The protein belongs to the bacterial ribosomal protein bL27 family.

In Buchnera aphidicola subsp. Acyrthosiphon pisum (strain Tuc7), this protein is Large ribosomal subunit protein bL27.